Reading from the N-terminus, the 85-residue chain is Turmerin (85 aa).

In terms of processing, the N-terminus is blocked.

Its function is as follows. Inhibition of trypsin. Has anticarcinogenic activity, prevents transformation of DMBA-treated JB6 cells. Has antipromoter activity, prevents promotion by tetradecanoyl phorbal acetate (TPA) in JB6 cells. Prevents tertiary butyl hydroperoxide-induced mutagenesis. Protects AT base pairs and shows antimutagenesis activity in TA102 and TA104 S.typhimurium mutagenesis tests. Inhibits paw edema formation induced by phospholipase A2 in Swiss Wistar mice. Prevents the release of arachidonate, the parent compound for the synthesis of prostaglandins and prostacyclins. Has antimalarial activity, kills P.falciparum. Has antivenom activity, nullifies the lethal effects of N.naja venom and inhibits phospholipase A2 present in N.naja venom. Has antifungal activity, inhibits cilia formation by A.niger. Is not toxic or allergenic. The chain is Turmerin from Curcuma longa (Turmeric).